The sequence spans 89 residues: FMRFamide-like neuropeptides 19 (89 aa).

A signal peptide spans Met1–Gly20. The propeptide occupies Gln21–Glu67. Phe76 carries the post-translational modification Phenylalanine amide. A propeptide spanning residues Ala80–Gly89 is cleaved from the precursor.

This sequence belongs to the FARP (FMRFamide related peptide) family. In terms of tissue distribution, each flp gene is expressed in a distinct set of neurons. Flp-19 is expressed in the URX interneurons, the serotonin and acetylcholine-expressing HSN neurons, and the AIN, AWA and BAG neurons.

The protein resides in the secreted. In terms of biological role, FMRFamides and FMRFamide-like peptides are neuropeptides. WANQVRF-amide inhibits the activity of dissected pharyngeal myogenic muscle system. This Caenorhabditis elegans protein is FMRFamide-like neuropeptides 19.